The chain runs to 207 residues: Outer-membrane lipoprotein carrier protein (207 aa).

The signal sequence occupies residues 1–21; it reads MRLIRMLLATALTFSVIPAHA.

The protein belongs to the LolA family. In terms of assembly, monomer.

The protein resides in the periplasm. Its function is as follows. Participates in the translocation of lipoproteins from the inner membrane to the outer membrane. Only forms a complex with a lipoprotein if the residue after the N-terminal Cys is not an aspartate (The Asp acts as a targeting signal to indicate that the lipoprotein should stay in the inner membrane). The sequence is that of Outer-membrane lipoprotein carrier protein from Pseudomonas syringae pv. tomato (strain ATCC BAA-871 / DC3000).